The chain runs to 72 residues: Arrestin-E (72 aa).

Belongs to the arrestin family. In terms of tissue distribution, adrenal, cerebral cortex, heart, hypothalamus, intestine, liver, lung, pituitary, retina and testis.

This Rattus norvegicus (Rat) protein is Arrestin-E (Ear).